The following is a 1092-amino-acid chain: SUMO-specific isopeptidase USPL1 (1092 aa).

Disordered stretches follow at residues 145-168 and 185-207; these read VYDE…TADS and TKDP…EGCT. 2 stretches are compositionally biased toward polar residues: residues 148–163 and 197–206; these read ETSS…QNPI and GRPSPQNEGC. Positions 227-500 constitute a USP domain; the sequence is VQWKNAYALC…EIHIVIWERK (274 aa). The active-site Nucleophile is the Cys-236. The segment at 236 to 495 is SUMO-binding; the sequence is CWLDCILSAL…EVPASEIHIV (260 aa). The active-site Proton acceptor is the His-456. 3 disordered regions span residues 713-749, 797-859, and 904-930; these read LKPE…SLKE, GGFK…STSC, and AALM…GSPN. The span at 732 to 748 shows a compositional bias: polar residues; that stretch reads ADSQTTTSKSLQNQSLK. Residues 810–819 show a composition bias toward basic residues; the sequence is HVSKKARKSA. The segment covering 821-832 has biased composition (pro residues); sequence KPPPISKPPAGP. Ser-909 is subject to Phosphoserine.

Belongs to the peptidase C19 family. In terms of assembly, interacts with ELL.

It localises to the nucleus. It is found in the cajal body. In terms of biological role, SUMO-specific isopeptidase involved in protein desumoylation. Specifically binds SUMO proteins with a higher affinity for SUMO2 and SUMO3 which it cleaves more efficiently. Also able to process full-length SUMO proteins to their mature forms. Plays a key role in RNA polymerase-II-mediated snRNA transcription in the Cajal bodies. Is a component of complexes that can bind to U snRNA genes. This chain is SUMO-specific isopeptidase USPL1 (USPL1), found in Homo sapiens (Human).